A 404-amino-acid polypeptide reads, in one-letter code: Transcriptional repressor OPI1 (404 aa).

Ser10 is subject to Phosphoserine. The interval 25–51 (QSCRQKSQPSEDVSQADKMPASESSTT) is disordered. Polar residues predominate over residues 26-37 (SCRQKSQPSEDV). The segment at 109–138 (KRQKLSRAIAKGKDNLKEYKLNMSIESKKR) is basic motif. The leucine-zipper stretch occupies residues 139–160 (LVTCLHLLKLANKQLSDKISCL). Disordered stretches follow at residues 170-201 (HPLH…DEEF), 305-327 (LQQQ…SSVT), and 378-404 (QQQQ…DSKD). Over residues 186–201 (GEDETSSDEDDDDEEF) the composition is skewed to acidic residues. The FFAT signature appears at 200–206 (EFFDASE). Residues 378 to 387 (QQQQYRQQQQ) show a composition bias toward low complexity. Positions 394 to 404 (KPSQDNVDSKD) are enriched in polar residues.

Interacts with SCS2.

Its subcellular location is the endoplasmic reticulum. It is found in the nucleus. In terms of biological role, negative regulator of the transcriptional complex INO2-INO4 in response to phospholipid precursor availability. When precursors become limiting, OPI1 is retained at the endoplasmic reticulum (ER) and INO2-INO4 activates INO1 and other genes required for phospholipid biosynthesis, whereas abundant precursor availability results in targeting of OPI1 to the nucleus to repress transcription of these genes. Binds directly to phosphatidic acid, which is required for ER targeting and may act as sensing mechanism for precursor availability, as phosphatidic acid becomes rapidly depleted upon phospholipid biosynthesis. The sequence is that of Transcriptional repressor OPI1 (OPI1) from Saccharomyces cerevisiae (strain ATCC 204508 / S288c) (Baker's yeast).